A 167-amino-acid chain; its full sequence is Urease accessory protein UreE (167 aa).

Residues 137–158 (EAGAYQSAPHGHSHSHAHGHDH) form a disordered region.

It belongs to the UreE family.

The protein localises to the cytoplasm. Its function is as follows. Involved in urease metallocenter assembly. Binds nickel. Probably functions as a nickel donor during metallocenter assembly. The sequence is that of Urease accessory protein UreE from Pseudomonas putida (strain ATCC 700007 / DSM 6899 / JCM 31910 / BCRC 17059 / LMG 24140 / F1).